The chain runs to 235 residues: MKIDLIISASDIKEEKIKNKTVVVIDILRATSVIVTALNNGCNEVIPVLEVEDAMKIVKDNRKKYILGGERNALKIEGFDFSNSPLDYTKDVVKDKTLVMTTTNGTRAIHGAMSAKNILIGAMINARSIANKVLELDNDLIIINSGTNGEFSIDDFVCAGYIIDCILKNRDAELSDIAITAHYVYSENKDIHSFVHKAKHYNILSNLGLKDDINYCCSKDIVDIVPEFHYPKITK.

It belongs to the ComB family. Mg(2+) is required as a cofactor.

The enzyme catalyses (2R)-O-phospho-3-sulfolactate + H2O = (2R)-3-sulfolactate + phosphate. The protein is Probable 2-phosphosulfolactate phosphatase of Clostridium novyi (strain NT).